Here is a 310-residue protein sequence, read N- to C-terminus: Repression factor of MSEs protein 1 (310 aa).

2 disordered regions span residues 83 to 155 (TQEV…EANA) and 192 to 230 (DGIRRRSSRISERDKRRSQSRLGSEEDEEGDGHDGDEGE). Low complexity predominate over residues 92 to 106 (RNTSSSSSSTRSNSS). The span at 107-120 (ADISDTEYSGENTP) shows a compositional bias: polar residues. Basic residues predominate over residues 127 to 136 (SRRRRTRSRA). Residues 139–155 (RENSLPASLPSISEANA) show a composition bias toward polar residues. The span at 192–208 (DGIRRRSSRISERDKRR) shows a compositional bias: basic and acidic residues. Residue Ser-215 is modified to Phosphoserine.

In terms of assembly, interacts directly with HST1 and SUM1. Required for the interaction between HST1 and SUM1.

It is found in the nucleus. In terms of biological role, tethering factor required for histone deacetylase HST1-mediated repression. Probably involved in targeting HST1 to a subset of SUM1-regulated genes. The sequence is that of Repression factor of MSEs protein 1 (RFM1) from Saccharomyces cerevisiae (strain ATCC 204508 / S288c) (Baker's yeast).